Here is a 215-residue protein sequence, read N- to C-terminus: Mediator of RNA polymerase II transcription subunit 20 (215 aa).

Belongs to the Mediator complex subunit 20 family. Component of the Mediator complex.

The protein localises to the nucleus. Its function is as follows. Component of the Mediator complex, a coactivator involved in the regulated transcription of nearly all RNA polymerase II-dependent genes. Mediator functions as a bridge to convey information from gene-specific regulatory proteins to the basal RNA polymerase II transcription machinery. Mediator is recruited to promoters by direct interactions with regulatory proteins and serves as a scaffold for the assembly of a functional preinitiation complex with RNA polymerase II and the general transcription factors. This chain is Mediator of RNA polymerase II transcription subunit 20 (SRB2), found in Candida glabrata (strain ATCC 2001 / BCRC 20586 / JCM 3761 / NBRC 0622 / NRRL Y-65 / CBS 138) (Yeast).